Here is a 140-residue protein sequence, read N- to C-terminus: ATP synthase epsilon chain (140 aa).

It belongs to the ATPase epsilon chain family. As to quaternary structure, F-type ATPases have 2 components, CF(1) - the catalytic core - and CF(0) - the membrane proton channel. CF(1) has five subunits: alpha(3), beta(3), gamma(1), delta(1), epsilon(1). CF(0) has three main subunits: a, b and c.

The protein resides in the cell inner membrane. Its function is as follows. Produces ATP from ADP in the presence of a proton gradient across the membrane. The polypeptide is ATP synthase epsilon chain (Colwellia maris).